The sequence spans 445 residues: Argininosuccinate synthase (445 aa).

Residues 17–25 (AFSGGLDTS) and alanine 43 contribute to the ATP site. Tyrosine 99 provides a ligand contact to L-citrulline. ATP contacts are provided by glycine 129 and threonine 131. 3 residues coordinate L-aspartate: threonine 131, asparagine 135, and aspartate 136. Asparagine 135 provides a ligand contact to L-citrulline. Residue aspartate 136 participates in ATP binding. L-citrulline is bound by residues arginine 139 and serine 192. Aspartate 194 contributes to the ATP binding site. The L-citrulline site is built by threonine 201, glutamate 203, and glutamate 280.

Belongs to the argininosuccinate synthase family. Type 2 subfamily. As to quaternary structure, homotetramer.

It localises to the cytoplasm. The enzyme catalyses L-citrulline + L-aspartate + ATP = 2-(N(omega)-L-arginino)succinate + AMP + diphosphate + H(+). It functions in the pathway amino-acid biosynthesis; L-arginine biosynthesis; L-arginine from L-ornithine and carbamoyl phosphate: step 2/3. This Ralstonia nicotianae (strain ATCC BAA-1114 / GMI1000) (Ralstonia solanacearum) protein is Argininosuccinate synthase (argG).